Reading from the N-terminus, the 185-residue chain is uncharacterized protein (185 aa).

A run of 5 helical transmembrane segments spans residues 4 to 24 (IAWM…LGLA), 35 to 55 (GLLF…ATGV), 60 to 80 (GASA…SIAY), 123 to 143 (VLAY…INDS), and 152 to 172 (ILKL…SYFI).

The protein localises to the cell membrane. This is an uncharacterized protein from Bacillus subtilis (strain 168).